A 272-amino-acid chain; its full sequence is NH(3)-dependent NAD(+) synthetase (272 aa).

45–52 serves as a coordination point for ATP; the sequence is GISGGQDS. Asp-51 is a Mg(2+) binding site. Arg-138 is a binding site for deamido-NAD(+). Residue Thr-158 coordinates ATP. Glu-163 contacts Mg(2+). Residues Lys-171 and Asp-178 each coordinate deamido-NAD(+). Positions 187 and 209 each coordinate ATP. 258–259 provides a ligand contact to deamido-NAD(+); sequence HK.

This sequence belongs to the NAD synthetase family. As to quaternary structure, homodimer.

It catalyses the reaction deamido-NAD(+) + NH4(+) + ATP = AMP + diphosphate + NAD(+) + H(+). Its pathway is cofactor biosynthesis; NAD(+) biosynthesis; NAD(+) from deamido-NAD(+) (ammonia route): step 1/1. Catalyzes the ATP-dependent amidation of deamido-NAD to form NAD. Uses ammonia as a nitrogen source. The sequence is that of NH(3)-dependent NAD(+) synthetase from Bacillus cereus (strain ATCC 14579 / DSM 31 / CCUG 7414 / JCM 2152 / NBRC 15305 / NCIMB 9373 / NCTC 2599 / NRRL B-3711).